The chain runs to 670 residues: C6 finger domain transcription factor iacK (670 aa).

Residues 1–84 form a disordered region; that stretch reads MNTSPDYAQP…GEPKQSGPTV (84 aa). Pro residues predominate over residues 44 to 54; sequence GPPPPPPPPPT. The segment covering 55 to 74 has biased composition (low complexity); it reads ATATAATAAATTTTAAPSAT. Positions 88–114 form a DNA-binding region, zn(2)-C6 fungal-type; sequence CLACRSKHLKCDGGNPCARCQASESIC. A disordered region spans residues 122-157; the sequence is GYKGPRRNGTQNPNKRHAAASDDGSPNSNGSNESCP. The segment covering 142–155 has biased composition (low complexity); it reads SDDGSPNSNGSNES.

Its subcellular location is the nucleus. Transcription factor; part of the gene cluster that mediates the biosynthesis of iso-A82775C, a enylepoxycyclohexane and biosynthetic precursor of the chloropestolide anticancer natural products. The chain is C6 finger domain transcription factor iacK from Pestalotiopsis fici (strain W106-1 / CGMCC3.15140).